Reading from the N-terminus, the 201-residue chain is 3-isopropylmalate dehydratase small subunit (201 aa).

This sequence belongs to the LeuD family. LeuD type 1 subfamily. Heterodimer of LeuC and LeuD.

The enzyme catalyses (2R,3S)-3-isopropylmalate = (2S)-2-isopropylmalate. It functions in the pathway amino-acid biosynthesis; L-leucine biosynthesis; L-leucine from 3-methyl-2-oxobutanoate: step 2/4. Its function is as follows. Catalyzes the isomerization between 2-isopropylmalate and 3-isopropylmalate, via the formation of 2-isopropylmaleate. The chain is 3-isopropylmalate dehydratase small subunit from Shewanella putrefaciens (strain CN-32 / ATCC BAA-453).